The chain runs to 196 residues: Nitrogen regulatory protein P-II homolog (196 aa).

Residues M1–S61 constitute a chloroplast transit peptide. ATP is bound by residues G108 to Q112 and G161 to K164. Position 110 (G110) interacts with Mg(2+).

This sequence belongs to the P(II) protein family. In terms of assembly, homodimer. Interacts with NAGK. Interaction with NAGK is dependent of MgATP and inhibited by 2-oxoglutarate, arginine, glutamate, citrate, and oxaloacetate.

Its subcellular location is the plastid. It localises to the chloroplast. In terms of biological role, participates in sensing carbon and organic nitrogen status and regulates some steps of primary carbon and nitrogen metabolism. Required for nitrite uptake in chloroplasts and regulates arginine biosynthesis through interaction with acetylglutamate kinase (NAGK) in chloroplasts. Regulates fatty acids synthesis in chloroplasts by interacting with the acetyl-CoA carboxylase complex and inhibiting acetyl-CoA carboxylase (ACCase) activity. In Arabidopsis thaliana (Mouse-ear cress), this protein is Nitrogen regulatory protein P-II homolog (GLB1).